We begin with the raw amino-acid sequence, 162 residues long: Caveolin-2 (162 aa).

At 1–86 (MGLESEKADV…FEISKYVLYK (86 aa)) the chain is on the cytoplasmic side. Tyr-19 carries the post-translational modification Phosphotyrosine. Residues Ser-20, Ser-23, and Ser-36 each carry the phosphoserine modification. Residues 87–107 (FLTFFLAIPLAFAAGILFAIL) constitute an intramembrane region (helical). Residues 108–162 (SCLHIWIIMPFVKTCLMVLPSVQTIWKSVTDVVIAPLCTSVGRSFSSVSLQLSQD) lie on the Cytoplasmic side of the membrane.

It belongs to the caveolin family. Monomer or homodimer. Interacts with CAV1; the interaction forms a stable heterooligomeric complex that is required for targeting to lipid rafts and for caveolae formation. Tyrosine phosphorylated forms do not form heterooligomers with the Tyr-19-phosphorylated form existing as a monomer or dimer. Interacts (tyrosine phosphorylated form) with the SH2 domain-containing proteins, RASA1, NCK1 and SRC. Interacts (tyrosine phosphorylated form) with INSR. Interacts (Tyr-19 phosphorylated form) with MAPK1 (phosphorylated form); the interaction, promoted by insulin, leads to nuclear location and MAPK1 activation. Interacts with STAT3; the interaction is increased on insulin-induced tyrosine phosphorylation leading to STAT activation. Post-translationally, phosphorylated on serine and tyrosine residues. CAV1 promotes phosphorylation on Ser-23 which then targets the complex to the plasma membrane, lipid rafts and caveolae. Phosphorylation on Ser-36 appears to modulate mitosis in endothelial cells. Phosphorylation on Tyr-19 is required for insulin-induced phosphorylation of MAPK1 and DNA binding of STAT3. Tyrosine phosphorylation is induced by both EGF and insulin.

The protein localises to the nucleus. It is found in the golgi apparatus membrane. The protein resides in the cell membrane. It localises to the membrane. Its subcellular location is the caveola. May act as a scaffolding protein within caveolar membranes. Interacts directly with G-protein alpha subunits and can functionally regulate their activity. Acts as an accessory protein in conjunction with CAV1 in targeting to lipid rafts and driving caveolae formation. The Ser-36 phosphorylated form has a role in modulating mitosis in endothelial cells. Positive regulator of cellular mitogenesis of the MAPK signaling pathway. Required for the insulin-stimulated nuclear translocation and activation of MAPK1 and STAT3, and the subsequent regulation of cell cycle progression. In Echinops telfairi (Lesser hedgehog tenrec), this protein is Caveolin-2 (CAV2).